The chain runs to 576 residues: Trehalase 2 (576 aa).

The protein belongs to the glycosyl hydrolase 15 family.

The enzyme catalyses alpha,alpha-trehalose + H2O = alpha-D-glucose + beta-D-glucose. It participates in glycan degradation; trehalose degradation; D-glucose from alpha,alpha-trehalose: step 1/1. Its function is as follows. Catalyzes the hydrolysis of alpha,alpha-trehalose into two molecules of D-glucose. In Sulfolobus acidocaldarius (strain ATCC 33909 / DSM 639 / JCM 8929 / NBRC 15157 / NCIMB 11770), this protein is Trehalase 2 (treH2).